The following is a 521-amino-acid chain: Probable methylmalonate-semialdehyde/malonate-semialdehyde dehydrogenase [acylating], mitochondrial (521 aa).

Residues Ala170, Phe172, Lys196, Glu199, Arg200, and Ser249 each coordinate NAD(+). Residue Cys304 is the Nucleophile of the active site. Glu404 provides a ligand contact to NAD(+).

It belongs to the aldehyde dehydrogenase family. Homotetramer.

It is found in the mitochondrion. It carries out the reaction 2-methyl-3-oxopropanoate + NAD(+) + CoA + H2O = propanoyl-CoA + hydrogencarbonate + NADH + H(+). The catalysed reaction is 3-oxopropanoate + NAD(+) + CoA + H2O = hydrogencarbonate + acetyl-CoA + NADH + H(+). Probable malonate and methylmalonate semialdehyde dehydrogenase involved in the catabolism of valine, thymine, and compounds catabolized by way of beta-alanine, including uracil and cytidine. This chain is Probable methylmalonate-semialdehyde/malonate-semialdehyde dehydrogenase [acylating], mitochondrial, found in Anopheles gambiae (African malaria mosquito).